A 199-amino-acid chain; its full sequence is dITP/XTP pyrophosphatase (199 aa).

A substrate-binding site is contributed by threonine 8–lysine 13. Aspartate 68 acts as the Proton acceptor in catalysis. Aspartate 68 serves as a coordination point for Mg(2+). Residues serine 69, phenylalanine 155 to aspartate 158, lysine 177, and histidine 182 to arginine 183 each bind substrate.

Belongs to the HAM1 NTPase family. As to quaternary structure, homodimer. The cofactor is Mg(2+).

The catalysed reaction is XTP + H2O = XMP + diphosphate + H(+). It catalyses the reaction dITP + H2O = dIMP + diphosphate + H(+). The enzyme catalyses ITP + H2O = IMP + diphosphate + H(+). In terms of biological role, pyrophosphatase that catalyzes the hydrolysis of nucleoside triphosphates to their monophosphate derivatives, with a high preference for the non-canonical purine nucleotides XTP (xanthosine triphosphate), dITP (deoxyinosine triphosphate) and ITP. Seems to function as a house-cleaning enzyme that removes non-canonical purine nucleotides from the nucleotide pool, thus preventing their incorporation into DNA/RNA and avoiding chromosomal lesions. In Borrelia duttonii (strain Ly), this protein is dITP/XTP pyrophosphatase.